The following is a 697-amino-acid chain: Elongation factor G 2 (697 aa).

The tr-type G domain maps to 5-280 (SKYRNIGIFA…AVVDYLPAPN (276 aa)). Residues 14-21 (AHVDAGKT), 78-82 (DTPGH), and 132-135 (NKLD) each bind GTP.

Belongs to the TRAFAC class translation factor GTPase superfamily. Classic translation factor GTPase family. EF-G/EF-2 subfamily.

The protein resides in the cytoplasm. Its function is as follows. Catalyzes the GTP-dependent ribosomal translocation step during translation elongation. During this step, the ribosome changes from the pre-translocational (PRE) to the post-translocational (POST) state as the newly formed A-site-bound peptidyl-tRNA and P-site-bound deacylated tRNA move to the P and E sites, respectively. Catalyzes the coordinated movement of the two tRNA molecules, the mRNA and conformational changes in the ribosome. This chain is Elongation factor G 2, found in Shewanella sp. (strain MR-4).